A 306-amino-acid chain; its full sequence is Ribonuclease Z (306 aa).

Residues His63, His65, Asp67, His68, His141, Asp211, and His269 each coordinate Zn(2+). The Proton acceptor role is filled by Asp67.

It belongs to the RNase Z family. Homodimer. The cofactor is Zn(2+).

It carries out the reaction Endonucleolytic cleavage of RNA, removing extra 3' nucleotides from tRNA precursor, generating 3' termini of tRNAs. A 3'-hydroxy group is left at the tRNA terminus and a 5'-phosphoryl group is left at the trailer molecule.. Its function is as follows. Zinc phosphodiesterase, which displays some tRNA 3'-processing endonuclease activity. Probably involved in tRNA maturation, by removing a 3'-trailer from precursor tRNA. This chain is Ribonuclease Z, found in Staphylococcus aureus (strain MSSA476).